A 650-amino-acid chain; its full sequence is Acetyl-coenzyme A synthetase (650 aa).

Residues 191–194 (RGGR), threonine 311, and asparagine 335 each bind CoA. Residues 387-389 (GEP), 411-416 (DTWWQT), aspartate 500, and arginine 515 each bind ATP. Serine 523 lines the CoA pocket. An ATP-binding site is contributed by arginine 526. Mg(2+) is bound by residues valine 537, histidine 539, and valine 542. A CoA-binding site is contributed by arginine 584. Lysine 609 carries the N6-acetyllysine modification.

Belongs to the ATP-dependent AMP-binding enzyme family. It depends on Mg(2+) as a cofactor. In terms of processing, acetylated. Deacetylation by the SIR2-homolog deacetylase activates the enzyme.

The catalysed reaction is acetate + ATP + CoA = acetyl-CoA + AMP + diphosphate. Catalyzes the conversion of acetate into acetyl-CoA (AcCoA), an essential intermediate at the junction of anabolic and catabolic pathways. AcsA undergoes a two-step reaction. In the first half reaction, AcsA combines acetate with ATP to form acetyl-adenylate (AcAMP) intermediate. In the second half reaction, it can then transfer the acetyl group from AcAMP to the sulfhydryl group of CoA, forming the product AcCoA. The protein is Acetyl-coenzyme A synthetase of Shewanella sediminis (strain HAW-EB3).